Reading from the N-terminus, the 252-residue chain is 14-3-3 protein 10 (252 aa).

Belongs to the 14-3-3 family. Homodimer.

This is 14-3-3 protein 10 (TFT10) from Solanum lycopersicum (Tomato).